The sequence spans 219 residues: Redox-sensing transcriptional repressor Rex (219 aa).

The H-T-H motif DNA-binding region spans 17-56 (VYLRVLDNLVKRDIEVVSSKSLSKETGFTAEQIRKDLAFF). Residue 91–96 (GAGHLG) coordinates NAD(+).

This sequence belongs to the transcriptional regulatory Rex family. As to quaternary structure, homodimer.

Its subcellular location is the cytoplasm. In terms of biological role, modulates transcription in response to changes in cellular NADH/NAD(+) redox state. The sequence is that of Redox-sensing transcriptional repressor Rex from Natranaerobius thermophilus (strain ATCC BAA-1301 / DSM 18059 / JW/NM-WN-LF).